The primary structure comprises 357 residues: Peptide chain release factor 1 (357 aa).

At Gln236 the chain carries N5-methylglutamine.

Belongs to the prokaryotic/mitochondrial release factor family. In terms of processing, methylated by PrmC. Methylation increases the termination efficiency of RF1.

The protein localises to the cytoplasm. In terms of biological role, peptide chain release factor 1 directs the termination of translation in response to the peptide chain termination codons UAG and UAA. The chain is Peptide chain release factor 1 from Mycolicibacterium vanbaalenii (strain DSM 7251 / JCM 13017 / BCRC 16820 / KCTC 9966 / NRRL B-24157 / PYR-1) (Mycobacterium vanbaalenii).